The following is a 102-amino-acid chain: Protein Tat (102 aa).

The tract at residues 1–24 (MEPVDPRLEPWKHPGSQPKTACNN) is interaction with human CREBBP. Residues 1 to 48 (MEPVDPRLEPWKHPGSQPKTACNNCYCKKCCYHCQVCFLTKGLGISYG) form a transactivation region. C22, C25, and C27 together coordinate Zn(2+). The cysteine-rich stretch occupies residues 22–37 (CNNCYCKKCCYHCQVC). At K28 the chain carries N6-acetyllysine; by host PCAF. Zn(2+)-binding residues include C30, H33, C34, and C37. The interval 38–48 (FLTKGLGISYG) is core. The disordered stretch occupies residues 48–102 (GRKKRRQRRGPPQGSQTHQVSLSKQPTSQPRGDPTGPKESKEKVERETETDPAVQ). Positions 49–57 (RKKRRQRRG) match the Nuclear localization signal, RNA-binding (TAR), and protein transduction motif. Residues 49-86 (RKKRRQRRGPPQGSQTHQVSLSKQPTSQPRGDPTGPKE) form an interaction with the host capping enzyme RNGTT region. N6-acetyllysine; by host EP300 and GCN5L2 occurs at positions 50 and 51. R52 and R53 each carry asymmetric dimethylarginine; by host PRMT6. A compositionally biased stretch (polar residues) spans 62–77 (SQTHQVSLSKQPTSQP). K71 is covalently cross-linked (Glycyl lysine isopeptide (Lys-Gly) (interchain with G-Cter in ubiquitin)). Residues 78-80 (RGD) carry the Cell attachment site motif. The span at 83-96 (GPKESKEKVERETE) shows a compositional bias: basic and acidic residues.

This sequence belongs to the lentiviruses Tat family. As to quaternary structure, interacts with host CCNT1. Associates with the P-TEFb complex composed at least of Tat, P-TEFb (CDK9 and CCNT1), TAR RNA, RNA Pol II. Recruits the HATs CREBBP, TAF1/TFIID, EP300, PCAF and GCN5L2. Interacts with host KAT5/Tip60; this interaction targets the latter to degradation. Interacts with the host deacetylase SIRT1. Interacts with host capping enzyme RNGTT; this interaction stimulates RNGTT. Binds to host KDR, and to the host integrins ITGAV/ITGB3 and ITGA5/ITGB1. Interacts with host KPNB1/importin beta-1 without previous binding to KPNA1/importin alpha-1. Interacts with EIF2AK2. Interacts with host nucleosome assembly protein NAP1L1; this interaction may be required for the transport of Tat within the nucleus, since the two proteins interact at the nuclear rim. Interacts with host C1QBP/SF2P32; this interaction involves lysine-acetylated Tat. Interacts with the host chemokine receptors CCR2, CCR3 and CXCR4. Interacts with host DPP4/CD26; this interaction may trigger an anti-proliferative effect. Interacts with host LDLR. Interacts with the host extracellular matrix metalloproteinase MMP1. Interacts with host PRMT6; this interaction mediates Tat's methylation. Interacts with, and is ubiquitinated by MDM2/Hdm2. Interacts with host PSMC3 and HTATIP2. Interacts with STAB1; this interaction may overcome SATB1-mediated repression of IL2 and IL2RA (interleukin) in T cells by binding to the same domain than HDAC1. Interacts (when acetylated) with human CDK13, thereby increasing HIV-1 mRNA splicing and promoting the production of the doubly spliced HIV-1 protein Nef. Interacts with host TBP; this interaction modulates the activity of transcriptional pre-initiation complex. Interacts with host RELA. Interacts with host PLSCR1; this interaction negatively regulates Tat transactivation activity by altering its subcellular distribution. In terms of processing, asymmetrical arginine methylation by host PRMT6 seems to diminish the transactivation capacity of Tat and affects the interaction with host CCNT1. Acetylation by EP300, CREBBP, GCN5L2/GCN5 and PCAF regulates the transactivation activity of Tat. EP300-mediated acetylation of Lys-50 promotes dissociation of Tat from the TAR RNA through the competitive binding to PCAF's bromodomain. In addition, the non-acetylated Tat's N-terminus can also interact with PCAF. PCAF-mediated acetylation of Lys-28 enhances Tat's binding to CCNT1. Lys-50 is deacetylated by SIRT1. Post-translationally, polyubiquitination by host MDM2 does not target Tat to degradation, but activates its transactivation function and fosters interaction with CCNT1 and TAR RNA. In terms of processing, phosphorylated by EIF2AK2 on serine and threonine residues adjacent to the basic region important for TAR RNA binding and function. Phosphorylation of Tat by EIF2AK2 is dependent on the prior activation of EIF2AK2 by dsRNA.

The protein localises to the host nucleus. Its subcellular location is the host nucleolus. The protein resides in the host cytoplasm. It localises to the secreted. Functionally, transcriptional activator that increases RNA Pol II processivity, thereby increasing the level of full-length viral transcripts. Recognizes a hairpin structure at the 5'-LTR of the nascent viral mRNAs referred to as the transactivation responsive RNA element (TAR) and recruits the cyclin T1-CDK9 complex (P-TEFb complex) that will in turn hyperphosphorylate the RNA polymerase II to allow efficient elongation. The CDK9 component of P-TEFb and other Tat-activated kinases hyperphosphorylate the C-terminus of RNA Pol II that becomes stabilized and much more processive. Other factors such as HTATSF1/Tat-SF1, SUPT5H/SPT5, and HTATIP2 are also important for Tat's function. Besides its effect on RNA Pol II processivity, Tat induces chromatin remodeling of proviral genes by recruiting the histone acetyltransferases (HATs) CREBBP, EP300 and PCAF to the chromatin. This also contributes to the increase in proviral transcription rate, especially when the provirus integrates in transcriptionally silent region of the host genome. To ensure maximal activation of the LTR, Tat mediates nuclear translocation of NF-kappa-B by interacting with host RELA. Through its interaction with host TBP, Tat may also modulate transcription initiation. Tat can reactivate a latently infected cell by penetrating in it and transactivating its LTR promoter. In the cytoplasm, Tat is thought to act as a translational activator of HIV-1 mRNAs. Extracellular circulating Tat can be endocytosed by surrounding uninfected cells via the binding to several surface receptors such as CD26, CXCR4, heparan sulfate proteoglycans (HSPG) or LDLR. Neurons are rarely infected, but they internalize Tat via their LDLR. Through its interaction with nuclear HATs, Tat is potentially able to control the acetylation-dependent cellular gene expression. Modulates the expression of many cellular genes involved in cell survival, proliferation or in coding for cytokines or cytokine receptors. Tat plays a role in T-cell and neurons apoptosis. Tat induced neurotoxicity and apoptosis probably contribute to neuroAIDS. Circulating Tat also acts as a chemokine-like and/or growth factor-like molecule that binds to specific receptors on the surface of the cells, affecting many cellular pathways. In the vascular system, Tat binds to ITGAV/ITGB3 and ITGA5/ITGB1 integrins dimers at the surface of endothelial cells and competes with bFGF for heparin-binding sites, leading to an excess of soluble bFGF. The sequence is that of Protein Tat from Human immunodeficiency virus type 1 group M subtype B (isolate RF/HAT3) (HIV-1).